The following is a 155-amino-acid chain: Protein SprT-like (155 aa).

The SprT-like domain maps to 7-145; the sequence is QQHMEEVSLQ…GSCGGRLKQT (139 aa). His67 is a binding site for Zn(2+). The active site involves Glu68. Position 71 (His71) interacts with Zn(2+).

This sequence belongs to the SprT family. Zn(2+) serves as cofactor.

It localises to the cytoplasm. The chain is Protein SprT-like from Listeria innocua serovar 6a (strain ATCC BAA-680 / CLIP 11262).